The following is a 312-amino-acid chain: Protoheme IX farnesyltransferase (312 aa).

The Cytoplasmic portion of the chain corresponds to 1–36 (MNKSNTAIDPTNVIEAGPDSSVADVQQKSWKDYLVL). Residues 37–55 (AKQGIVTSNLITTFAGIYL) traverse the membrane as a helical segment. Residues 56–69 (AIVYTGTVFTMHLD) are Extracellular-facing. The chain crosses the membrane as a helical span at residues 70 to 88 (TMIFALLGAALVMAGGCTL). The Cytoplasmic portion of the chain corresponds to 89–110 (NNYIDRDIDHLMERTKERPTVT). The helical transmembrane segment at 111 to 129 (GRFSAKHVLLVGLAQAALG) threads the bilayer. Residues 130–138 (IIFLALTTP) lie on the Extracellular side of the membrane. A helical transmembrane segment spans residues 139 to 157 (TAAVIGLIGLFIYVVLYTM). Over 158-228 (WTKRTTTLNT…YRAAGIPMLP (71 aa)) the chain is Cytoplasmic. The chain crosses the membrane as a helical span at residues 229 to 247 (VVAGFEMTKRQMVVYVAAL). The Extracellular portion of the chain corresponds to 248–259 (LPVSLMLYPFGL). A helical transmembrane segment spans residues 260–275 (VYTIVAAVLGVGWLAL). Residues 276–296 (GIAGFKMKDDIKWARLMFVYS) are Cytoplasmic-facing. Residues 297–307 (LNYLTILFVLM) traverse the membrane as a helical segment. At 308–312 (VIVHF) the chain is on the extracellular side.

Belongs to the UbiA prenyltransferase family.

It localises to the cell membrane. The enzyme catalyses heme b + (2E,6E)-farnesyl diphosphate + H2O = Fe(II)-heme o + diphosphate. Its pathway is porphyrin-containing compound metabolism; heme O biosynthesis; heme O from protoheme: step 1/1. In terms of biological role, converts protoheme IX and farnesyl diphosphate to heme O. In Alkalihalophilus pseudofirmus (strain ATCC BAA-2126 / JCM 17055 / OF4) (Bacillus pseudofirmus), this protein is Protoheme IX farnesyltransferase (ctaB).